The primary structure comprises 363 residues: Chorismate synthase (363 aa).

Arginine 48 contributes to the NADP(+) binding site. Residues 125–127, 238–239, glycine 278, 293–297, and arginine 319 each bind FMN; these read RSS, NA, and KPTAS.

It belongs to the chorismate synthase family. Homotetramer. The cofactor is FMNH2.

The enzyme catalyses 5-O-(1-carboxyvinyl)-3-phosphoshikimate = chorismate + phosphate. Its pathway is metabolic intermediate biosynthesis; chorismate biosynthesis; chorismate from D-erythrose 4-phosphate and phosphoenolpyruvate: step 7/7. Functionally, catalyzes the anti-1,4-elimination of the C-3 phosphate and the C-6 proR hydrogen from 5-enolpyruvylshikimate-3-phosphate (EPSP) to yield chorismate, which is the branch point compound that serves as the starting substrate for the three terminal pathways of aromatic amino acid biosynthesis. This reaction introduces a second double bond into the aromatic ring system. This is Chorismate synthase from Acinetobacter baylyi (strain ATCC 33305 / BD413 / ADP1).